Here is a 141-residue protein sequence, read N- to C-terminus: MASCNMASAASNFLVATPNVASNTNTSRTTMLFFSSKNYGSTAPRLVVRAAEEAAPPAAAATAEPAEAPVKAAKPPPIGPKRGTKVRILRKESYWYKGTGSVVACDQDPNTRYPVVVRFNKVNYANVSTNNYALDEIEEVK.

The N-terminal 49 residues, 1–49, are a transit peptide targeting the chloroplast; it reads MASCNMASAASNFLVATPNVASNTNTSRTTMLFFSSKNYGSTAPRLVVR. The segment covering 57 to 73 has biased composition (low complexity); it reads PAAAATAEPAEAPVKAA. The disordered stretch occupies residues 57–83; that stretch reads PAAAATAEPAEAPVKAAKPPPIGPKRG.

The protein belongs to the PsaE family. Post-translationally, 2 isoforms exists (ratio 1:1). With or without the N-terminal alanine.

The protein resides in the plastid. It localises to the chloroplast thylakoid membrane. Its function is as follows. Stabilizes the interaction between PsaC and the PSI core, assists the docking of the ferredoxin to PSI and interacts with ferredoxin-NADP oxidoreductase. The chain is Photosystem I reaction center subunit IV A, chloroplastic (PSAEA) from Nicotiana sylvestris (Wood tobacco).